Consider the following 639-residue polypeptide: Chaperone protein DnaK (639 aa).

Thr198 is subject to Phosphothreonine; by autocatalysis. Positions 603–618 (AKAQTQGGAQEGAAKQ) are enriched in low complexity. The disordered stretch occupies residues 603–639 (AKAQTQGGAQEGAAKQSNATADDVVDAEFEEVKDDKK). A compositionally biased stretch (acidic residues) spans 625–639 (DVVDAEFEEVKDDKK).

The protein belongs to the heat shock protein 70 family.

Its function is as follows. Acts as a chaperone. In Shewanella oneidensis (strain ATCC 700550 / JCM 31522 / CIP 106686 / LMG 19005 / NCIMB 14063 / MR-1), this protein is Chaperone protein DnaK.